We begin with the raw amino-acid sequence, 321 residues long: MERMLLLSPPSLAARPERLNTILSSHSRYATDLQMLDRVAAGLVSLPQSTYDIVMLLTDVDGLGTGSTSAMGRGVIQSVVRALRPGGKFKRENGTFTSTECPDNTELMLAGLVFDDTGGLLKPDFGPENIVPLKLGKRKPVHSVSSNGTGTSGPHVNMQLSTGSMLKGQTTTIKGVGFVDFTDDPSLSEADIYSGQTDDELIDEETLLDGEDMGRPIIQPPECRPKAGKRRRACKDCTCGLAERLREEDKAARAKADATLETMKLAPKELAEVDFTVQGKLGSCGNCALGDAFRCDGCPYIGLPPFKPGEEVRLLSNDVQL.

The interval 1–131 (MERMLLLSPP…KPDFGPENIV (131 aa)) is N-terminal SAM-like domain. A linker region spans residues 132–213 (PLKLGKRKPV…EETLLDGEDM (82 aa)). Residues cysteine 223, cysteine 234, cysteine 237, and cysteine 239 each contribute to the [2Fe-2S] cluster site. The interval 223-239 (CRPKAGKRRRACKDCTC) is fe-S binding site A. 4 residues coordinate [4Fe-4S] cluster: cysteine 284, cysteine 287, cysteine 295, and cysteine 298. Short sequence motifs (cx2C motif) lie at residues 284–287 (CGNC) and 295–298 (CDGC). Residues 284–298 (CGNCALGDAFRCDGC) are fe-S binding site B.

This sequence belongs to the anamorsin family. As to quaternary structure, monomer. Interacts with TAH18. Interacts with MIA40. The cofactor is [2Fe-2S] cluster. [4Fe-4S] cluster is required as a cofactor.

The protein resides in the cytoplasm. Its subcellular location is the mitochondrion intermembrane space. Component of the cytosolic iron-sulfur (Fe-S) protein assembly (CIA) machinery required for the maturation of extramitochondrial Fe-S proteins. Part of an electron transfer chain functioning in an early step of cytosolic Fe-S biogenesis, facilitating the de novo assembly of a [4Fe-4S] cluster on the scaffold complex CFD1-NBP35. Electrons are transferred to DRE2 from NADPH via the FAD- and FMN-containing protein TAH18. TAH18-DRE2 are also required for the assembly of the diferric tyrosyl radical cofactor of ribonucleotide reductase (RNR), probably by providing electrons for reduction during radical cofactor maturation in the catalytic small subunit RNR2. The protein is Fe-S cluster assembly protein DRE2 of Coccidioides immitis (strain RS) (Valley fever fungus).